Here is a 625-residue protein sequence, read N- to C-terminus: MNAAPTVLQQQAQSLSEAVTQPIPGSRKIFVQGSRADLQVPMREIALTRTPTLFGGEENPPLSVYDTSGPYTDPRVAIDLAAGLAPLRAQWIAERGDTVALDGLSSSFGRGREHDVRLDAVRFPARRLPRVARQGANVTQMHYARRGIITPEMEYVAIRENQRLEAVTDASLRRQHPGQAFGASIQQRITPEFVREEIARGRAILPNNINHPESEPMIIGRNFLTKINANIGNSAVSSGIAEEVEKLVWSIRWGGDTVMDLSTGKHIHETREWIIRNSPVPIGTVPIYQALEKVDGRAEALTWEIFRDTLIEQAEQGVDYFTIHAGVLLRYVPLTAQRVTGIVSRGGSIMAKWCLAHHKENFLYTHFEDICQIMKAYDVAFSLGDGLRPGCIADANDAAQFGELETLGELTKLAWKHDVQTMIEGPGHVPMQLIKENMDKQLRECGEAPFYTLGPLTTDIAPGYDHITSAIGAAMIGWFGTAMLCYVTPKEHLGLPNRQDVRDGIMAYKIAAHAADLAKGHPGAQVRDNALSKARFEFRWDDQFHLGLDPEKAKEFHDQTLPKDAHKLAHFCSMCGPHFCSMKITQDVRDYAAEHGMSEAQALSTGMQEKSAQFVAQGAQVYRAT.

Substrate-binding positions include N230, M259, Y288, H324, 344-346 (SRG), 385-388 (DGLR), and E424. H428 contributes to the Zn(2+) binding site. Residue Y451 participates in substrate binding. H492 contacts Zn(2+). [4Fe-4S] cluster-binding residues include C572, C575, and C580.

The protein belongs to the ThiC family. In terms of assembly, homodimer. It depends on [4Fe-4S] cluster as a cofactor.

It carries out the reaction 5-amino-1-(5-phospho-beta-D-ribosyl)imidazole + S-adenosyl-L-methionine = 4-amino-2-methyl-5-(phosphooxymethyl)pyrimidine + CO + 5'-deoxyadenosine + formate + L-methionine + 3 H(+). It participates in cofactor biosynthesis; thiamine diphosphate biosynthesis. In terms of biological role, catalyzes the synthesis of the hydroxymethylpyrimidine phosphate (HMP-P) moiety of thiamine from aminoimidazole ribotide (AIR) in a radical S-adenosyl-L-methionine (SAM)-dependent reaction. The protein is Phosphomethylpyrimidine synthase of Xanthomonas euvesicatoria pv. vesicatoria (strain 85-10) (Xanthomonas campestris pv. vesicatoria).